We begin with the raw amino-acid sequence, 205 residues long: High frequency lysogenization protein HflD homolog (205 aa).

This sequence belongs to the HflD family.

The protein localises to the cytoplasm. The protein resides in the cell inner membrane. This chain is High frequency lysogenization protein HflD homolog, found in Hahella chejuensis (strain KCTC 2396).